Reading from the N-terminus, the 251-residue chain is Geranylgeranylglyceryl phosphate synthase (251 aa).

Residues Asp25 and Ser54 each coordinate Mg(2+). Sn-glycerol 1-phosphate contacts are provided by residues 173-179 (YLEAGSG), 204-205 (GG), and 226-227 (GT).

This sequence belongs to the GGGP/HepGP synthase family. Group II subfamily. Mg(2+) serves as cofactor.

The protein resides in the cytoplasm. It carries out the reaction sn-glycerol 1-phosphate + (2E,6E,10E)-geranylgeranyl diphosphate = sn-3-O-(geranylgeranyl)glycerol 1-phosphate + diphosphate. It functions in the pathway membrane lipid metabolism; glycerophospholipid metabolism. Prenyltransferase that catalyzes the transfer of the geranylgeranyl moiety of geranylgeranyl diphosphate (GGPP) to the C3 hydroxyl of sn-glycerol-1-phosphate (G1P). This reaction is the first ether-bond-formation step in the biosynthesis of archaeal membrane lipids. This chain is Geranylgeranylglyceryl phosphate synthase, found in Pyrococcus furiosus (strain ATCC 43587 / DSM 3638 / JCM 8422 / Vc1).